The following is a 199-amino-acid chain: LIM domain-containing protein WLIM2b (199 aa).

LIM zinc-binding domains are found at residues 8 to 68 and 106 to 166; these read QKCK…LFKE and EKCA…LFKE.

As to quaternary structure, interacts with F-actin. Expressed in roots, leaves, stems, flowers and siliques. Barely detected in pollen.

The protein localises to the cytoplasm. It localises to the cytoskeleton. In terms of biological role, binds to actin filaments and promotes cross-linking into thick bundles. Has an actin-stabilizing activity. The actin regulatory activities are not regulated by pH and [Ca(2+)]. This chain is LIM domain-containing protein WLIM2b, found in Arabidopsis thaliana (Mouse-ear cress).